Reading from the N-terminus, the 292-residue chain is Tissue factor (292 aa).

Positions 1–32 (MAPPTRLQVPRPGTAVPYTVLLGWLLAQVARA) are cleaved as a signal peptide. At 33-250 (ADTTGRAYNL…SREQGRAREM (218 aa)) the chain is on the extracellular side. Fibronectin type-III domains are found at residues 35–126 (TTGR…PFRN) and 148–240 (QVGT…TECT). Residue N41 is glycosylated (N-linked (GlcNAc...) asparagine). 2 short sequence motifs (WKS motif) span residues 44-46 (WKS) and 75-77 (WKS). Residues C79 and C87 are joined by a disulfide bond. N-linked (GlcNAc...) asparagine glycans are attached at residues N114, N154, N167, and N182. A disulfide bridge links C216 with C239. A helical transmembrane segment spans residues 251 to 271 (FFIIGAVVVVALLIIVLSVTV). The Cytoplasmic portion of the chain corresponds to 272-292 (YKCRKARAGPSGKESSPLNIA). A lipid anchor (S-palmitoyl cysteine) is attached at C274.

Belongs to the tissue factor family. As to quaternary structure, interacts with HSPE; the interaction, inhibited by heparin, promotes the generation of activated factor X and activates coagulation in the presence of activated factor VII. In terms of tissue distribution, brain, heart.

It localises to the membrane. In terms of biological role, initiates blood coagulation by forming a complex with circulating factor VII or VIIa. The [TF:VIIa] complex activates factors IX or X by specific limited proteolysis. TF plays a role in normal hemostasis by initiating the cell-surface assembly and propagation of the coagulation protease cascade. The sequence is that of Tissue factor (F3) from Oryctolagus cuniculus (Rabbit).